The sequence spans 664 residues: MKLQSLLVSAAVLTSLTENVNAWSPNNSYVPANVTCDDDINLVREASGLSDNETEWLKKRDAYTKEALHSFLNRATSNFSDTSLLSTLFGSNSSNMPKIAVACSGGGYRAMLSGAGMLAAMDNRTDGANEHGLGGLLQGATYLAGLSGGNWLTSTLAWNNWTSVQAIVDNTTESNSIWDISHSILTPDGINIFKTGSRWDDISDDVQDKKDAGFNISLADVWGRALAYNFWPSLHRGGVGYTWSTLREADVFKNGEMPFPITVADGRYPGTTVINLNATLFEFNPFEMGSWDPTLNAFTDVKYLGTNVTNGKPVNKGQCIAGFDNTGFITATSSTLFNQFLLRLNSTDLPSFIANLATDFLEDLSDNSDDIAIYAPNPFKEANFLQKNATSSIIESEYLFLVDGGEDNQNIPLVPLLQKERELDVIFALDNSADTDDYWPDGASLVNTYQRQFGSQGLNLSFPYVPDVNTFVNLGLNKKPTFFGCDARNLTDLEYIPPLIVYIPNSRHSFNGNQSTFKMSYSDSERLGMIKNGFEAATMGNFTDDSDFLGCVGCAIIRRKQQNLNATLPSECSQCFTNYCWNGTIDSRSVSGVGNDDYSSSASLSASAAAASASASASASASASASGSSTHKKNAGNALVNYSNLNTNTFIGVLSVISAVFGLI.

A signal peptide spans 1-22; sequence MKLQSLLVSAAVLTSLTENVNA. N-linked (GlcNAc...) asparagine glycosylation is found at N26, N33, N52, N78, N92, N123, N160, N170, N215, N277, N307, N345, N388, N459, N489, N513, N541, N565, and N582. The PLA2c domain maps to 35–586; sequence TCDDDINLVR…TNYCWNGTID (552 aa). N634 is lipidated: GPI-anchor amidated asparagine. Residues 635 to 664 constitute a propeptide, removed in mature form; sequence AGNALVNYSNLNTNTFIGVLSVISAVFGLI.

The protein belongs to the lysophospholipase family.

The protein localises to the cell membrane. It catalyses the reaction a 1-acyl-sn-glycero-3-phosphocholine + H2O = sn-glycerol 3-phosphocholine + a fatty acid + H(+). The catalysed reaction is a 1-acyl-sn-glycero-3-phospho-(1D-myo-inositol) + H2O = sn-glycero-3-phospho-1D-myo-inositol + a fatty acid + H(+). It carries out the reaction a 1-acyl-sn-glycero-3-phospho-L-serine + H2O = sn-glycero-3-phospho-L-serine + a fatty acid + H(+). The enzyme catalyses a 1,2-diacyl-sn-glycero-3-phospho-(1D-myo-inositol) + 2 H2O = sn-glycero-3-phospho-1D-myo-inositol + 2 a carboxylate + 2 H(+). It catalyses the reaction a 1,2-diacyl-sn-glycero-3-phospho-L-serine + 2 H2O = sn-glycero-3-phospho-L-serine + 2 a carboxylate + 2 H(+). The catalysed reaction is 2 1-hexadecanoyl-sn-glycero-3-phosphocholine = 1,2-dihexadecanoyl-sn-glycero-3-phosphocholine + sn-glycerol 3-phosphocholine. It carries out the reaction 1-hexadecanoyl-sn-glycero-3-phosphocholine + H2O = sn-glycerol 3-phosphocholine + hexadecanoate + H(+). The enzyme catalyses 1,2-dihexadecanoyl-sn-glycero-3-phosphocholine + H2O = 1-hexadecanoyl-sn-glycero-3-phosphocholine + hexadecanoate + H(+). Its function is as follows. Sequentially removes both fatty acyl groups from diacylglycerophospholipids and therefore has both phospholipase B and lysophospholipase activities. It also displays transacylase activity. Substrate preference is phosphatidylserine &gt; phosphatidylinositol &gt;&gt; phosphatidylcholine &gt; phosphatidylethanolamine. The substrate specificity is pH- and ion-dependent. In contrast with activities observed at optimum pH 3.5, the order of substrate preference at pH 5.5 is phosphatidylcholine = phosphatidylethanolamine &gt;&gt; phosphatidylinositol. Degrades predominantly phosphatidylcholine and to some extent phosphatidylinositol in vivo. This is Lysophospholipase 1 from Saccharomyces cerevisiae (strain ATCC 204508 / S288c) (Baker's yeast).